The primary structure comprises 234 residues: Leucyl/phenylalanyl-tRNA--protein transferase (234 aa).

Belongs to the L/F-transferase family.

The protein localises to the cytoplasm. It catalyses the reaction N-terminal L-lysyl-[protein] + L-leucyl-tRNA(Leu) = N-terminal L-leucyl-L-lysyl-[protein] + tRNA(Leu) + H(+). The catalysed reaction is N-terminal L-arginyl-[protein] + L-leucyl-tRNA(Leu) = N-terminal L-leucyl-L-arginyl-[protein] + tRNA(Leu) + H(+). The enzyme catalyses L-phenylalanyl-tRNA(Phe) + an N-terminal L-alpha-aminoacyl-[protein] = an N-terminal L-phenylalanyl-L-alpha-aminoacyl-[protein] + tRNA(Phe). In terms of biological role, functions in the N-end rule pathway of protein degradation where it conjugates Leu, Phe and, less efficiently, Met from aminoacyl-tRNAs to the N-termini of proteins containing an N-terminal arginine or lysine. The protein is Leucyl/phenylalanyl-tRNA--protein transferase of Escherichia coli O7:K1 (strain IAI39 / ExPEC).